A 319-amino-acid polypeptide reads, in one-letter code: Probable deoxyhypusine synthase (319 aa).

K287 acts as the Nucleophile in catalysis.

It belongs to the deoxyhypusine synthase family. NAD(+) serves as cofactor.

It carries out the reaction [eIF5A protein]-L-lysine + spermidine = [eIF5A protein]-deoxyhypusine + propane-1,3-diamine. It functions in the pathway protein modification; eIF5A hypusination. Catalyzes the NAD-dependent oxidative cleavage of spermidine and the subsequent transfer of the butylamine moiety of spermidine to the epsilon-amino group of a specific lysine residue of the eIF-5A precursor protein to form the intermediate deoxyhypusine residue. The protein is Probable deoxyhypusine synthase of Ignicoccus hospitalis (strain KIN4/I / DSM 18386 / JCM 14125).